The sequence spans 401 residues: MSREVFICDAVRTPIGRFGGSLSAVRADDLAAVPLKALVERNPGVDWSALDEVFLGCANQAGEDNRNVARMALLLAGLPESVPGVTLNRLCASGMDAIGTAFRAIACGEMELAIAGGVESMSRAPYVMGKADSAFGRGQKIEDTTIGWRFVNPLMKEQYGIDPMPQTADNVADDYRVSRADQDAFALRSQQRAGRAQEAGFFAEEIVPVTIRGRKGDTLVEHDEHPRPDTTLEALARLKPVNGPEKTVTAGNASGVNDGAAALVLASAEAVEKHGLTPRARVLGMASAGVAPRIMGIGPVPAVRKLLRRLDLAIDAFDVIELNEAFASQGLACLRELGVADDSEKVNPNGGAIALGHPLGMSGARLVLTALHQLEKSGGRRGLATMCVGVGQGLALAIERV.

Cys91 (acyl-thioester intermediate) is an active-site residue. Residues His357 and Cys387 each act as proton acceptor in the active site.

This sequence belongs to the thiolase-like superfamily. Thiolase family.

It catalyses the reaction succinyl-CoA + acetyl-CoA = 3-oxoadipyl-CoA + CoA. Its pathway is aromatic compound metabolism; beta-ketoadipate pathway; acetyl-CoA and succinyl-CoA from 3-oxoadipate: step 2/2. Catalyzes thiolytic cleavage of beta-ketoadipyl-CoA to succinyl-CoA and acetyl-CoA. The chain is Beta-ketoadipyl-CoA thiolase (pcaF) from Pseudomonas aeruginosa (strain ATCC 15692 / DSM 22644 / CIP 104116 / JCM 14847 / LMG 12228 / 1C / PRS 101 / PAO1).